A 120-amino-acid polypeptide reads, in one-letter code: Ribosomal protein eL22-like 1 (120 aa).

This sequence belongs to the eukaryotic ribosomal protein eL22 family.

This Xenopus tropicalis (Western clawed frog) protein is Ribosomal protein eL22-like 1 (rpl22l1).